A 179-amino-acid chain; its full sequence is ATP-dependent protease subunit HslV (179 aa).

Thr-7 is an active-site residue. The Na(+) site is built by Gly-162, Cys-165, and Thr-168.

Belongs to the peptidase T1B family. HslV subfamily. In terms of assembly, a double ring-shaped homohexamer of HslV is capped on each side by a ring-shaped HslU homohexamer. The assembly of the HslU/HslV complex is dependent on binding of ATP.

It localises to the cytoplasm. It carries out the reaction ATP-dependent cleavage of peptide bonds with broad specificity.. Allosterically activated by HslU binding. Functionally, protease subunit of a proteasome-like degradation complex believed to be a general protein degrading machinery. In Bordetella pertussis (strain Tohama I / ATCC BAA-589 / NCTC 13251), this protein is ATP-dependent protease subunit HslV.